The chain runs to 275 residues: Diaminopimelate epimerase (275 aa).

Residues Asn12, Gln45, and Asn65 each coordinate substrate. Cys74 serves as the catalytic Proton donor. Substrate contacts are provided by residues 75-76, Asn158, Asn191, and 209-210; these read GN and ER. Cys218 acts as the Proton acceptor in catalysis. 219-220 is a binding site for substrate; sequence GT.

This sequence belongs to the diaminopimelate epimerase family. In terms of assembly, homodimer.

The protein resides in the cytoplasm. The catalysed reaction is (2S,6S)-2,6-diaminopimelate = meso-2,6-diaminopimelate. Its pathway is amino-acid biosynthesis; L-lysine biosynthesis via DAP pathway; DL-2,6-diaminopimelate from LL-2,6-diaminopimelate: step 1/1. Functionally, catalyzes the stereoinversion of LL-2,6-diaminopimelate (L,L-DAP) to meso-diaminopimelate (meso-DAP), a precursor of L-lysine and an essential component of the bacterial peptidoglycan. This chain is Diaminopimelate epimerase, found in Shewanella putrefaciens (strain CN-32 / ATCC BAA-453).